Consider the following 186-residue polypeptide: UPF0301 protein Neut_0448 (186 aa).

It belongs to the UPF0301 (AlgH) family.

The protein is UPF0301 protein Neut_0448 of Nitrosomonas eutropha (strain DSM 101675 / C91 / Nm57).